The sequence spans 101 residues: MMLEHVLFLSAYLFSIGIFGLITSRNMVRALMCLELILNAVNLNLVTFSHLFDSRQLKGDIFSIFVITIAAAEAAIGLAIVSSIHRNRKSTRINQSNLLNK.

Helical transmembrane passes span Met-2–Ile-22, Met-32–Phe-52, and Ile-61–Val-81.

It belongs to the complex I subunit 4L family. In terms of assembly, NDH is composed of at least 16 different subunits, 5 of which are encoded in the nucleus.

It localises to the plastid. The protein localises to the chloroplast thylakoid membrane. It carries out the reaction a plastoquinone + NADH + (n+1) H(+)(in) = a plastoquinol + NAD(+) + n H(+)(out). The catalysed reaction is a plastoquinone + NADPH + (n+1) H(+)(in) = a plastoquinol + NADP(+) + n H(+)(out). Its function is as follows. NDH shuttles electrons from NAD(P)H:plastoquinone, via FMN and iron-sulfur (Fe-S) centers, to quinones in the photosynthetic chain and possibly in a chloroplast respiratory chain. The immediate electron acceptor for the enzyme in this species is believed to be plastoquinone. Couples the redox reaction to proton translocation, and thus conserves the redox energy in a proton gradient. The polypeptide is NAD(P)H-quinone oxidoreductase subunit 4L, chloroplastic (Piper cenocladum (Ant piper)).